We begin with the raw amino-acid sequence, 1500 residues long: Alpha-1-macroglobulin (1500 aa).

The N-terminal stretch at 1-24 is a signal peptide; that stretch reads MRRNQLPIPVFLLLLLLLPRDATA. Cysteines 48 and 86 form a disulfide. N-linked (GlcNAc...) asparagine glycans are attached at residues asparagine 55, asparagine 61, and asparagine 157. 2 disulfide bridges follow: cysteine 249/cysteine 298 and cysteine 267/cysteine 286. 2 N-linked (GlcNAc...) asparagine glycosylation sites follow: asparagine 382 and asparagine 412. A disulfide bridge links cysteine 469 with cysteine 562. Asparagine 568 is a glycosylation site (N-linked (GlcNAc...) asparagine). 6 disulfide bridges follow: cysteine 594/cysteine 785, cysteine 642/cysteine 689, cysteine 835/cysteine 863, cysteine 861/cysteine 897, cysteine 935/cysteine 1344, and cysteine 1094/cysteine 1142. Residues 686 to 746 form a bait region region; the sequence is PRYCPMYQAY…QEVEVRETVR (61 aa). Residues asparagine 883 and asparagine 944 are each glycosylated (N-linked (GlcNAc...) asparagine). Positions 986-989 form a cross-link, isoglutamyl cysteine thioester (Cys-Gln); sequence CGEQ. Asparagine 1005 is a glycosylation site (N-linked (GlcNAc...) asparagine). The interval 1360 to 1500 is receptor-binding domain; it reads EGEAPFTLKV…FSSDSEQGNA (141 aa). N-linked (GlcNAc...) asparagine glycans are attached at residues asparagine 1390 and asparagine 1448.

Belongs to the protease inhibitor I39 (alpha-2-macroglobulin) family. In terms of assembly, homotetramer; disulfide-linked. In terms of tissue distribution, widely expressed. Highest level in ovary, testis, uterus and prostate. Protein found in plasma.

It is found in the secreted. Is able to inhibit all four classes of proteinases by a unique 'trapping' mechanism. This protein has a peptide stretch, called the 'bait region' which contains specific cleavage sites for different proteinases. When a proteinase cleaves the bait region, a conformational change is induced in the protein which traps the proteinase. The entrapped enzyme remains active against low molecular weight substrates (activity against high molecular weight substrates is greatly reduced). Following cleavage in the bait region a thioester bond is hydrolyzed and mediates the covalent binding of the protein to the proteinase. This chain is Alpha-1-macroglobulin, found in Rattus norvegicus (Rat).